Consider the following 673-residue polypeptide: Sodium/myo-inositol cotransporter 2 (673 aa).

Residues 1 to 27 (MESATISPQPPQSDSLEAFPQKSMEPA) are Extracellular-facing. A helical transmembrane segment spans residues 28–48 (DIAVLVLYFLFVLAVGLWSTV). Over 49–65 (RTKRDTVKGYFLAGGDM) the chain is Cytoplasmic. The helical transmembrane segment at 66–88 (VWWPVGASLFASNVGSGHFIGLA) threads the bilayer. Topologically, residues 89–102 (GSGAAVGISVAAYE) are extracellular. The helical transmembrane segment at 103-123 (LNGLFSVLMLAWVFLPIYIAG) threads the bilayer. Residues 124–148 (QVTTMPEYLRRRFGGNRISITLAVL) are Cytoplasmic-facing. The chain crosses the membrane as a helical span at residues 149–169 (YLFIYIFTKISVDMYAGAIFI). The Extracellular portion of the chain corresponds to 170-180 (QQSLHLDLYLA). The chain crosses the membrane as a helical span at residues 181–201 (IVGLLAITALYTVAGGLAAVI). The Cytoplasmic portion of the chain corresponds to 202 to 208 (YTDALQT). Residues 209 to 229 (VIMLIGAFILMGYSFAAVGGM) traverse the membrane as a helical segment. Over 230–272 (EGLKDQYFLALASNRSENSSCGLPREDAFHIFRDPLTSDLPWP) the chain is Extracellular. Residues 273–293 (GILFGMSIPSLWYWCTDQVIV) form a helical membrane-spanning segment. Residues 294–308 (QRSLAAKNLSHAKGG) lie on the Cytoplasmic side of the membrane. A helical membrane pass occupies residues 309 to 329 (SLMAAYLKVLPLFLMVFPGMV). The Extracellular segment spans residues 330 to 375 (SRVLFPDQVACAHPDICQRVCSNPSGCSDIAYPKLVLELLPTGLRG). A helical transmembrane segment spans residues 376-396 (LMMAVMVAALMSSLTSIFNSA). At 397 to 418 (STIFTMDLWNHIRPRASERELM) the chain is on the cytoplasmic side. A helical membrane pass occupies residues 419–439 (IVGRIFVFALVLVSILWIPIV). Residues 440 to 446 (QASQGGQ) lie on the Extracellular side of the membrane. A helical membrane pass occupies residues 447–467 (LFIYIQSISSYLQPPVAMVFI). The Cytoplasmic segment spans residues 468-479 (MGCFWKRTNEKG). Residues 480–500 (AFSGLILGLLLGLVRLILDFV) form a helical membrane-spanning segment. Residues 501 to 521 (YAQPRCDQPDDRPAVVKDVHY) are Extracellular-facing. Residues 522–542 (LYFSMILSFTTLITVVTVSWF) form a helical membrane-spanning segment. Residues 543–652 (TETPSKEMVS…SLEENPLVKT (110 aa)) lie on the Cytoplasmic side of the membrane. Residues 653-673 (LLDVNCIVCISCAIFLWGYFA) form a helical membrane-spanning segment.

It belongs to the sodium:solute symporter (SSF) (TC 2.A.21) family.

The protein resides in the membrane. The protein localises to the apical cell membrane. It carries out the reaction myo-inositol(out) + 2 Na(+)(out) = myo-inositol(in) + 2 Na(+)(in). The catalysed reaction is 1D-chiro-inositol(out) + 2 Na(+)(out) = 1D-chiro-inositol(in) + 2 Na(+)(in). It catalyses the reaction D-glucose(out) + 2 Na(+)(out) = D-glucose(in) + 2 Na(+)(in). The enzyme catalyses D-xylose(out) + 2 Na(+)(out) = D-xylose(in) + 2 Na(+)(in). MI transport activity inhibited by D-chiro-inositol (DCI), phlorizin (Pz) and sodium (Na(+)). Insulin increases D-chiro-inositol uptake. In terms of biological role, involved in the sodium-dependent cotransport of myo-inositol (MI) with a Na(+):MI stoichiometry of 2:1. Exclusively responsible for apical MI transport and absorption in intestine. Can also transport D-chiro-inositol (DCI) but not L-fucose. Exhibits stereospecific cotransport of both D-glucose and D-xylose. May induce apoptosis through the TNF-alpha, PDCD1 pathway. May play a role in the regulation of MI concentration in serum, involving reabsorption in at least the proximal tubule of the kidney. The polypeptide is Sodium/myo-inositol cotransporter 2 (Mus musculus (Mouse)).